A 213-amino-acid chain; its full sequence is Holliday junction resolvase RecU (213 aa).

Residues Thr-98, Asp-100, Glu-113, and Gln-132 each coordinate Mg(2+).

This sequence belongs to the RecU family. Mg(2+) serves as cofactor.

The protein resides in the cytoplasm. The catalysed reaction is Endonucleolytic cleavage at a junction such as a reciprocal single-stranded crossover between two homologous DNA duplexes (Holliday junction).. In terms of biological role, endonuclease that resolves Holliday junction intermediates in genetic recombination. Cleaves mobile four-strand junctions by introducing symmetrical nicks in paired strands. Promotes annealing of linear ssDNA with homologous dsDNA. Required for DNA repair, homologous recombination and chromosome segregation. The sequence is that of Holliday junction resolvase RecU from Ligilactobacillus salivarius (strain UCC118) (Lactobacillus salivarius).